Reading from the N-terminus, the 159-residue chain is NAD(P)H-quinone oxidoreductase subunit J, chloroplastic (159 aa).

Belongs to the complex I 30 kDa subunit family. NDH is composed of at least 16 different subunits, 5 of which are encoded in the nucleus.

Its subcellular location is the plastid. It is found in the chloroplast thylakoid membrane. The catalysed reaction is a plastoquinone + NADH + (n+1) H(+)(in) = a plastoquinol + NAD(+) + n H(+)(out). It carries out the reaction a plastoquinone + NADPH + (n+1) H(+)(in) = a plastoquinol + NADP(+) + n H(+)(out). NDH shuttles electrons from NAD(P)H:plastoquinone, via FMN and iron-sulfur (Fe-S) centers, to quinones in the photosynthetic chain and possibly in a chloroplast respiratory chain. The immediate electron acceptor for the enzyme in this species is believed to be plastoquinone. Couples the redox reaction to proton translocation, and thus conserves the redox energy in a proton gradient. This chain is NAD(P)H-quinone oxidoreductase subunit J, chloroplastic, found in Brachypodium distachyon (Purple false brome).